The primary structure comprises 151 residues: Probable flavodoxin 2 (151 aa).

The 141-residue stretch at 4–144 (ILLVYATMSG…ELINFGRQFA (141 aa)) folds into the Flavodoxin-like domain. Residues 10–14 (TMSGN) and 88–119 (VFGSGDTAYEFFCGAVDTLEAKIKERGGDIVL) each bind FMN.

The protein belongs to the flavodoxin family. Requires FMN as cofactor.

In terms of biological role, low-potential electron donor to a number of redox enzymes. The polypeptide is Probable flavodoxin 2 (ykuP) (Bacillus subtilis (strain 168)).